We begin with the raw amino-acid sequence, 279 residues long: Shikimate dehydrogenase (NADP(+)) (279 aa).

Residues Ser16–Ser18 and Thr63 each bind shikimate. Lys67 functions as the Proton acceptor in the catalytic mechanism. Positions 88 and 103 each coordinate shikimate. Residues Gly128–Ala132 and Met219 contribute to the NADP(+) site. Tyr221 is a binding site for shikimate. Gly243 is an NADP(+) binding site.

Belongs to the shikimate dehydrogenase family. Homodimer.

It carries out the reaction shikimate + NADP(+) = 3-dehydroshikimate + NADPH + H(+). The protein operates within metabolic intermediate biosynthesis; chorismate biosynthesis; chorismate from D-erythrose 4-phosphate and phosphoenolpyruvate: step 4/7. Functionally, involved in the biosynthesis of the chorismate, which leads to the biosynthesis of aromatic amino acids. Catalyzes the reversible NADPH linked reduction of 3-dehydroshikimate (DHSA) to yield shikimate (SA). The chain is Shikimate dehydrogenase (NADP(+)) from Aromatoleum aromaticum (strain DSM 19018 / LMG 30748 / EbN1) (Azoarcus sp. (strain EbN1)).